The chain runs to 389 residues: 23S rRNA (uracil(747)-C(5))-methyltransferase RlmC (389 aa).

4 residues coordinate [4Fe-4S] cluster: Cys12, Cys20, Cys23, and Cys99. Residues Gln224, Phe253, Glu274, and Asn321 each coordinate S-adenosyl-L-methionine. The active-site Nucleophile is the Cys348.

It belongs to the class I-like SAM-binding methyltransferase superfamily. RNA M5U methyltransferase family. RlmC subfamily.

The catalysed reaction is uridine(747) in 23S rRNA + S-adenosyl-L-methionine = 5-methyluridine(747) in 23S rRNA + S-adenosyl-L-homocysteine + H(+). Its function is as follows. Catalyzes the formation of 5-methyl-uridine at position 747 (m5U747) in 23S rRNA. The sequence is that of 23S rRNA (uracil(747)-C(5))-methyltransferase RlmC from Shewanella sp. (strain W3-18-1).